Reading from the N-terminus, the 438-residue chain is Hydrogenobyrinate a,c-diamide synthase (438 aa).

In terms of domain architecture, GATase cobBQ-type spans 247-438 (RIALAEDAAF…TFFHAIAKGG (192 aa)). Cys-329 acts as the Nucleophile in catalysis.

The protein belongs to the CobB/CbiA family. Mg(2+) is required as a cofactor.

The catalysed reaction is hydrogenobyrinate + 2 L-glutamine + 2 ATP + 2 H2O = hydrogenobyrinate a,c-diamide + 2 L-glutamate + 2 ADP + 2 phosphate + 2 H(+). Its pathway is cofactor biosynthesis; adenosylcobalamin biosynthesis; cob(II)yrinate a,c-diamide from precorrin-2 (aerobic route): step 9/10. In terms of biological role, catalyzes the ATP-dependent amidation of the two carboxylate groups at positions a and c of hydrogenobyrinate, using either L-glutamine or ammonia as the nitrogen source. The sequence is that of Hydrogenobyrinate a,c-diamide synthase from Agrobacterium fabrum (strain C58 / ATCC 33970) (Agrobacterium tumefaciens (strain C58)).